Consider the following 249-residue polypeptide: Tetraspanin-7 (249 aa).

Residues 1 to 16 (MASRRMETKPVITCLK) are Cytoplasmic-facing. A helical transmembrane segment spans residues 17–40 (TLLIIYSFVFWITGVILLAVGVWG). Residues 41-56 (KLTLGTYISLIAENST) lie on the Extracellular side of the membrane. Asn54 is a glycosylation site (N-linked (GlcNAc...) asparagine). A helical membrane pass occupies residues 57–75 (NAPYVLIGTGTTIVVFGLF). At 76-86 (GCFATCRGSPW) the chain is on the cytoplasmic side. Residues 87-112 (MLKLYAMFLSLVFLAELVAGISGFVF) traverse the membrane as a helical segment. Topologically, residues 113-213 (RHEIKDTFLR…LVTSFMETNM (101 aa)) are extracellular. 4 N-linked (GlcNAc...) asparagine glycosylation sites follow: Asn155, Asn158, Asn177, and Asn188. A helical membrane pass occupies residues 214–234 (GIIAGVAFGIAFSQLIGMLLA). Residues 235–249 (CCLSRFITANQYEMV) lie on the Cytoplasmic side of the membrane.

The protein belongs to the tetraspanin (TM4SF) family.

Its subcellular location is the membrane. Functionally, may be involved in cell proliferation and cell motility. In Mus musculus (Mouse), this protein is Tetraspanin-7 (Tspan7).